Consider the following 323-residue polypeptide: Aldo-keto reductase family 1 member C18 (323 aa).

Residues 20–24 (GFGTY) and Asp-50 each bind NADP(+). Tyr-55 (proton donor) is an active-site residue. His-117 contributes to the substrate binding site. NADP(+)-binding positions include 166–167 (SN), Gln-190, 216–221 (YGALGT), and 270–280 (KSFNEERIREN).

It belongs to the aldo/keto reductase family. Monomer.

The protein resides in the cytoplasm. It carries out the reaction (17R,20S)-17,20-dihydroxypregn-4-en-3-one + NADP(+) = 17alpha-hydroxyprogesterone + NADPH + H(+). It catalyses the reaction (17R,20S)-17,20-dihydroxypregn-4-en-3-one + NAD(+) = 17alpha-hydroxyprogesterone + NADH + H(+). Functionally, catalyzes the conversion of progesterone into 20-alpha-dihydroprogesterone (20 alpha-OHP). The chain is Aldo-keto reductase family 1 member C18 (Akr1c18) from Mus musculus (Mouse).